Reading from the N-terminus, the 417-residue chain is NADH-quinone oxidoreductase subunit D (417 aa).

The protein belongs to the complex I 49 kDa subunit family. NDH-1 is composed of 14 different subunits. Subunits NuoB, C, D, E, F, and G constitute the peripheral sector of the complex.

It localises to the cell inner membrane. It carries out the reaction a quinone + NADH + 5 H(+)(in) = a quinol + NAD(+) + 4 H(+)(out). Its function is as follows. NDH-1 shuttles electrons from NADH, via FMN and iron-sulfur (Fe-S) centers, to quinones in the respiratory chain. The immediate electron acceptor for the enzyme in this species is believed to be ubiquinone. Couples the redox reaction to proton translocation (for every two electrons transferred, four hydrogen ions are translocated across the cytoplasmic membrane), and thus conserves the redox energy in a proton gradient. This chain is NADH-quinone oxidoreductase subunit D, found in Aromatoleum aromaticum (strain DSM 19018 / LMG 30748 / EbN1) (Azoarcus sp. (strain EbN1)).